The primary structure comprises 132 residues: Large ribosomal subunit protein bL17 (132 aa).

This sequence belongs to the bacterial ribosomal protein bL17 family. In terms of assembly, part of the 50S ribosomal subunit. Contacts protein L32.

The protein is Large ribosomal subunit protein bL17 of Shewanella sediminis (strain HAW-EB3).